We begin with the raw amino-acid sequence, 379 residues long: Cobalt-precorrin-5B C(1)-methyltransferase (379 aa).

This sequence belongs to the CbiD family.

The catalysed reaction is Co-precorrin-5B + S-adenosyl-L-methionine = Co-precorrin-6A + S-adenosyl-L-homocysteine. Its pathway is cofactor biosynthesis; adenosylcobalamin biosynthesis; cob(II)yrinate a,c-diamide from sirohydrochlorin (anaerobic route): step 6/10. Catalyzes the methylation of C-1 in cobalt-precorrin-5B to form cobalt-precorrin-6A. This is Cobalt-precorrin-5B C(1)-methyltransferase from Salmonella arizonae (strain ATCC BAA-731 / CDC346-86 / RSK2980).